We begin with the raw amino-acid sequence, 723 residues long: MPNRGAHFSISRRKDFLMDFSERVFCGHLTPDHTGRRVLLAGWVDAFRDHGGLLFIHLRDRNGIIQIVFSPEAASADVYRQAASLRAEYCVAVQGEVRKRLPGTENPHIETGDIEVFVSELTVLSESEALPFAISDKAMVAGASSAGADHVNEDLRMQYRYLDIRRPAMQKNLILRHRISQCVREFLDSRGFVEVETPVLTMSTPEGARDYLVPSRIHPRSFYALPQSPQLFKQLLMIGGMERYFQLARCFRDEDLRPNRQPEFTQLDIEASFIDEEFLYELIEELTVRMFAIGGIALSRPFPRMTYAEAMDTTGSDRPDLRFGLRMADVTGVFSRTSYSIFKQILQRGGSIKGINIKGQSEKLSKNVLQNEYAKEIAPSFGAKGMTWMRAEEGKLESNIVQFFSADELEALKRVFQVEDGDVLIMVADPSCAIVNSALGQLRLHLGNRLGLIPEGVFYPVWITEFPLFEPTDEGGVTSSHHPFTAPDRTDFDPGNIEELLSLRSRAYDLVVNGEELGGGSIRINDREVQRRIFAALGLTEEDVKNKFGFFLRAFDFAAPPHGGLALGMDRVVSMILQTPSIREVIAFPKNRSAACPLTGAPSEVKREQLAELGLLNLGDKDVLPGDAEKEDRIDHLSWVSRIGIAEGERPVMESILAQAEELAAQVGDLAGNEEPVRSVAPVANRVREGLEAVRLSFSGTGRLLKNAPAVKGDYFKVAGILD.

Glu206 provides a ligand contact to L-aspartate. The aspartate stretch occupies residues 230–233 (QLFK). An L-aspartate-binding site is contributed by Arg252. ATP contacts are provided by residues 252-254 (RDE) and Gln261. His481 serves as a coordination point for L-aspartate. Position 516 (Glu516) interacts with ATP. Arg523 provides a ligand contact to L-aspartate. 568 to 571 (GMDR) contacts ATP.

Belongs to the class-II aminoacyl-tRNA synthetase family. Type 1 subfamily. As to quaternary structure, homodimer.

Its subcellular location is the cytoplasm. It catalyses the reaction tRNA(Asx) + L-aspartate + ATP = L-aspartyl-tRNA(Asx) + AMP + diphosphate. Aspartyl-tRNA synthetase with relaxed tRNA specificity since it is able to aspartylate not only its cognate tRNA(Asp) but also tRNA(Asn). Reaction proceeds in two steps: L-aspartate is first activated by ATP to form Asp-AMP and then transferred to the acceptor end of tRNA(Asp/Asn). The protein is Aspartate--tRNA(Asp/Asn) ligase 1 of Syntrophus aciditrophicus (strain SB).